The following is a 258-amino-acid chain: Granzyme K (258 aa).

An N-terminal signal peptide occupies residues 1-23 (MSFSSSALVFLVAGIYMSSESFH). Residues 24–25 (TE) constitute a propeptide, activation peptide. One can recognise a Peptidase S1 domain in the interval 26–253 (IIGGREVQPH…YQTWIKSKLA (228 aa)). Residues cysteine 51 and cysteine 67 are joined by a disulfide bond. Catalysis depends on charge relay system residues histidine 66 and aspartate 110. Cystine bridges form between cysteine 143-cysteine 214, cysteine 175-cysteine 193, and cysteine 204-cysteine 228. Catalysis depends on serine 208, which acts as the Charge relay system.

The protein belongs to the peptidase S1 family. Granzyme subfamily. In terms of tissue distribution, speen, lungs and liver non-parenchymal cells.

The protein localises to the cytoplasmic granule. This is Granzyme K (Gzmk) from Rattus norvegicus (Rat).